Consider the following 198-residue polypeptide: Syndecan-4 (198 aa).

The signal sequence occupies residues 1 to 23; that stretch reads MAPACLLAPLLLLLLGGFPLVPG. Over 24 to 145 the chain is Extracellular; the sequence is ESIRETEVID…QGSNIFERTE (122 aa). Disordered regions lie at residues 42 to 76 and 94 to 130; these read YFSGALPDDEDAGGSDDFELSGSGDLDDTEEPRPF and AQPGIRVPSEPKELEENEVIPKRAPSDVGDDMSNKVS. O-linked (Xyl...) (glycosaminoglycan) serine glycans are attached at residues S44, S62, and S64. The segment covering 48-71 has biased composition (acidic residues); that stretch reads PDDEDAGGSDDFELSGSGDLDDTE. Residues 102-118 are compositionally biased toward basic and acidic residues; the sequence is SEPKELEENEVIPKRAP. A helical membrane pass occupies residues 146 to 170; sequence VLAALIVGGVVGILFAVFLILLLVY. Residues 171 to 198 are Cytoplasmic-facing; that stretch reads RMKKKDEGSYDLGKKPIYKKAPTNEFYA.

Belongs to the syndecan proteoglycan family. As to quaternary structure, homodimer. Interacts with CDCP1 and SDCBP. Interacts (via its cytoplasmic domain) with GIPC (via its PDZ domain). Interacts (via its cytoplasmic domain) with NUDT16L1. Interacts with DNM2; this interaction is markedly enhanced at focal ahesion site upon induction of focal adhesions and stress-fiber formation. In terms of processing, shedding is enhanced by a number of factors such as heparanase, thrombin or EGF. Also by stress and wound healing. PMA-mediated shedding is inhibited by TIMP3. O-glycosylated; contains both chondroitin sulfate and heparan sulfate. Ser-44, Ser-62 and Ser-64 can all be modified by either chondroitin sulfate or heparan sulfate, and the protein exists in forms that contain only chondroitin sulfate, only heparan sulfate and both chondroitin sulfate and heparan sulfate. As to expression, ubiquitous. Highest levels in liver, kidney and lung.

The protein localises to the membrane. It is found in the secreted. Functionally, cell surface proteoglycan which regulates exosome biogenesis in concert with SDCBP and PDCD6IP. The polypeptide is Syndecan-4 (Mus musculus (Mouse)).